The chain runs to 339 residues: Anthranilate phosphoribosyltransferase (339 aa).

5-phospho-alpha-D-ribose 1-diphosphate-binding positions include G82, 85 to 86 (GD), T90, 92 to 95 (NIST), 110 to 118 (KHGNRSASG), and S122. G82 serves as a coordination point for anthranilate. S94 is a binding site for Mg(2+). N113 contacts anthranilate. R168 serves as a coordination point for anthranilate. Positions 226 and 227 each coordinate Mg(2+).

The protein belongs to the anthranilate phosphoribosyltransferase family. As to quaternary structure, homodimer. The cofactor is Mg(2+).

The catalysed reaction is N-(5-phospho-beta-D-ribosyl)anthranilate + diphosphate = 5-phospho-alpha-D-ribose 1-diphosphate + anthranilate. It participates in amino-acid biosynthesis; L-tryptophan biosynthesis; L-tryptophan from chorismate: step 2/5. Its function is as follows. Catalyzes the transfer of the phosphoribosyl group of 5-phosphorylribose-1-pyrophosphate (PRPP) to anthranilate to yield N-(5'-phosphoribosyl)-anthranilate (PRA). This Methanosphaerula palustris (strain ATCC BAA-1556 / DSM 19958 / E1-9c) protein is Anthranilate phosphoribosyltransferase.